The chain runs to 185 residues: Ribosome-recycling factor (185 aa).

A disordered region spans residues 128 to 158 (VRNTRQDANNKVKKLEKDKEISEDESKKAQE).

Belongs to the RRF family.

The protein localises to the cytoplasm. Its function is as follows. Responsible for the release of ribosomes from messenger RNA at the termination of protein biosynthesis. May increase the efficiency of translation by recycling ribosomes from one round of translation to another. The chain is Ribosome-recycling factor from Helicobacter pylori (strain J99 / ATCC 700824) (Campylobacter pylori J99).